Consider the following 207-residue polypeptide: Shikimate kinase (207 aa).

32–37 (GVGKST) lines the ATP pocket. Position 36 (serine 36) interacts with Mg(2+). Aspartate 54, arginine 78, and glycine 100 together coordinate substrate. An ATP-binding site is contributed by arginine 138. Arginine 157 is a binding site for substrate.

Belongs to the shikimate kinase family. Monomer. Mg(2+) is required as a cofactor.

The protein resides in the cytoplasm. It carries out the reaction shikimate + ATP = 3-phosphoshikimate + ADP + H(+). It functions in the pathway metabolic intermediate biosynthesis; chorismate biosynthesis; chorismate from D-erythrose 4-phosphate and phosphoenolpyruvate: step 5/7. Its function is as follows. Catalyzes the specific phosphorylation of the 3-hydroxyl group of shikimic acid using ATP as a cosubstrate. The chain is Shikimate kinase from Bradyrhizobium diazoefficiens (strain JCM 10833 / BCRC 13528 / IAM 13628 / NBRC 14792 / USDA 110).